A 547-amino-acid chain; its full sequence is Chaperonin GroEL 1 (547 aa).

Residues 30–33 (TLGP), Lys-51, 87–91 (DGTTT), Gly-415, and Asp-496 each bind ATP. The disordered stretch occupies residues 525–547 (KPEPKSPAGGPGMGGMGGMDGMM). Positions 533-547 (GGPGMGGMGGMDGMM) are enriched in gly residues.

The protein belongs to the chaperonin (HSP60) family. As to quaternary structure, forms a cylinder of 14 subunits composed of two heptameric rings stacked back-to-back. Interacts with the co-chaperonin GroES.

Its subcellular location is the cytoplasm. The enzyme catalyses ATP + H2O + a folded polypeptide = ADP + phosphate + an unfolded polypeptide.. Its function is as follows. Together with its co-chaperonin GroES, plays an essential role in assisting protein folding. The GroEL-GroES system forms a nano-cage that allows encapsulation of the non-native substrate proteins and provides a physical environment optimized to promote and accelerate protein folding. The chain is Chaperonin GroEL 1 from Cereibacter sphaeroides (strain ATCC 17023 / DSM 158 / JCM 6121 / CCUG 31486 / LMG 2827 / NBRC 12203 / NCIMB 8253 / ATH 2.4.1.) (Rhodobacter sphaeroides).